We begin with the raw amino-acid sequence, 149 residues long: D-aminoacyl-tRNA deacylase (149 aa).

The Gly-cisPro motif, important for rejection of L-amino acids signature appears at 137–138 (GP).

It belongs to the DTD family. As to quaternary structure, homodimer.

The protein resides in the cytoplasm. It catalyses the reaction glycyl-tRNA(Ala) + H2O = tRNA(Ala) + glycine + H(+). It carries out the reaction a D-aminoacyl-tRNA + H2O = a tRNA + a D-alpha-amino acid + H(+). Functionally, an aminoacyl-tRNA editing enzyme that deacylates mischarged D-aminoacyl-tRNAs. Also deacylates mischarged glycyl-tRNA(Ala), protecting cells against glycine mischarging by AlaRS. Acts via tRNA-based rather than protein-based catalysis; rejects L-amino acids rather than detecting D-amino acids in the active site. By recycling D-aminoacyl-tRNA to D-amino acids and free tRNA molecules, this enzyme counteracts the toxicity associated with the formation of D-aminoacyl-tRNA entities in vivo and helps enforce protein L-homochirality. This chain is D-aminoacyl-tRNA deacylase, found in Clostridium tetani (strain Massachusetts / E88).